We begin with the raw amino-acid sequence, 451 residues long: Tubulin alpha-3 chain (451 aa).

Gln-11 serves as a coordination point for GTP. An N6-acetyllysine modification is found at Lys-40. Residues Glu-71, Gly-144, Thr-145, Thr-179, Asn-206, and Asn-228 each contribute to the GTP site. Glu-71 contacts Mg(2+). Glu-254 is a catalytic residue.

The protein belongs to the tubulin family. As to quaternary structure, dimer of alpha and beta chains. A typical microtubule is a hollow water-filled tube with an outer diameter of 25 nm and an inner diameter of 15 nM. Alpha-beta heterodimers associate head-to-tail to form protofilaments running lengthwise along the microtubule wall with the beta-tubulin subunit facing the microtubule plus end conferring a structural polarity. Microtubules usually have 13 protofilaments but different protofilament numbers can be found in some organisms and specialized cells. Requires Mg(2+) as cofactor. Undergoes a tyrosination/detyrosination cycle, the cyclic removal and re-addition of a C-terminal tyrosine residue by the enzymes tubulin tyrosine carboxypeptidase (TTCP) and tubulin tyrosine ligase (TTL), respectively. In terms of processing, acetylation of alpha chains at Lys-40 stabilizes microtubules and affects affinity and processivity of microtubule motors. This modification has a role in multiple cellular functions, ranging from cell motility, cell cycle progression or cell differentiation to intracellular trafficking and signaling.

The protein localises to the cytoplasm. Its subcellular location is the cytoskeleton. The enzyme catalyses GTP + H2O = GDP + phosphate + H(+). Tubulin is the major constituent of microtubules, a cylinder consisting of laterally associated linear protofilaments composed of alpha- and beta-tubulin heterodimers. Microtubules grow by the addition of GTP-tubulin dimers to the microtubule end, where a stabilizing cap forms. Below the cap, tubulin dimers are in GDP-bound state, owing to GTPase activity of alpha-tubulin. This chain is Tubulin alpha-3 chain (TUBA3), found in Hordeum vulgare (Barley).